The primary structure comprises 267 residues: WUSCHEL-related homeobox 8 (267 aa).

The homeobox; WUS-type DNA-binding region spans 88–152; sequence TARQRWTPTP…NRRARSKRKQ (65 aa). Residues 148–195 are disordered; that stretch reads SKRKQAALPNNNAESEAEADEESPTDKKPKSDRPLHQNIAMRDHNSER. Residues 171-195 show a composition bias toward basic and acidic residues; sequence PTDKKPKSDRPLHQNIAMRDHNSER.

The protein belongs to the WUS homeobox family.

The protein resides in the nucleus. In terms of biological role, transcription factor which may be involved in developmental processes. This chain is WUSCHEL-related homeobox 8 (WOX8), found in Oryza sativa subsp. japonica (Rice).